Consider the following 145-residue polypeptide: Cytochrome b (145 aa).

Residues F38 to I58 traverse the membrane as a helical segment. Residues H42 and H56 each contribute to the heme b site. Position 61 (H61) interacts with a ubiquinone. Residues F85–F105 traverse the membrane as a helical segment.

Belongs to the cytochrome b family. In terms of assembly, fungal cytochrome b-c1 complex contains 10 subunits; 3 respiratory subunits, 2 core proteins and 5 low-molecular weight proteins. Cytochrome b-c1 complex is a homodimer. Requires heme b as cofactor.

The protein resides in the mitochondrion inner membrane. Its function is as follows. Component of the ubiquinol-cytochrome c reductase complex (complex III or cytochrome b-c1 complex) that is part of the mitochondrial respiratory chain. The b-c1 complex mediates electron transfer from ubiquinol to cytochrome c. Contributes to the generation of a proton gradient across the mitochondrial membrane that is then used for ATP synthesis. In Aspergillus fumigatus (Neosartorya fumigata), this protein is Cytochrome b (cob).